We begin with the raw amino-acid sequence, 421 residues long: Imidazolonepropionase (421 aa).

The Fe(3+) site is built by H80 and H82. The Zn(2+) site is built by H80 and H82. Residues R89, Y152, and H185 each coordinate 4-imidazolone-5-propanoate. N-formimidoyl-L-glutamate is bound at residue Y152. Fe(3+) is bound at residue H249. H249 serves as a coordination point for Zn(2+). Residue E252 coordinates 4-imidazolone-5-propanoate. Position 324 (D324) interacts with Fe(3+). D324 lines the Zn(2+) pocket. The N-formimidoyl-L-glutamate site is built by N326 and G328. 4-imidazolone-5-propanoate is bound at residue S329.

This sequence belongs to the metallo-dependent hydrolases superfamily. HutI family. It depends on Zn(2+) as a cofactor. Requires Fe(3+) as cofactor.

It is found in the cytoplasm. It carries out the reaction 4-imidazolone-5-propanoate + H2O = N-formimidoyl-L-glutamate. It participates in amino-acid degradation; L-histidine degradation into L-glutamate; N-formimidoyl-L-glutamate from L-histidine: step 3/3. In terms of biological role, catalyzes the hydrolytic cleavage of the carbon-nitrogen bond in imidazolone-5-propanoate to yield N-formimidoyl-L-glutamate. It is the third step in the universal histidine degradation pathway. This chain is Imidazolonepropionase, found in Bacillus velezensis (strain DSM 23117 / BGSC 10A6 / LMG 26770 / FZB42) (Bacillus amyloliquefaciens subsp. plantarum).